Consider the following 120-residue polypeptide: uncharacterized protein (120 aa).

A helical transmembrane segment spans residues 47–63 (VSIVIGLCTVLISAGAG).

It is found in the membrane. This is an uncharacterized protein from Sinorhizobium fredii (strain NBRC 101917 / NGR234).